Here is a 254-residue protein sequence, read N- to C-terminus: Phosphoribosylaminoimidazole-succinocarboxamide synthase 1 (254 aa).

It belongs to the SAICAR synthetase family.

It catalyses the reaction 5-amino-1-(5-phospho-D-ribosyl)imidazole-4-carboxylate + L-aspartate + ATP = (2S)-2-[5-amino-1-(5-phospho-beta-D-ribosyl)imidazole-4-carboxamido]succinate + ADP + phosphate + 2 H(+). It participates in purine metabolism; IMP biosynthesis via de novo pathway; 5-amino-1-(5-phospho-D-ribosyl)imidazole-4-carboxamide from 5-amino-1-(5-phospho-D-ribosyl)imidazole-4-carboxylate: step 1/2. This chain is Phosphoribosylaminoimidazole-succinocarboxamide synthase 1 (purC1), found in Agrobacterium fabrum (strain C58 / ATCC 33970) (Agrobacterium tumefaciens (strain C58)).